A 131-amino-acid polypeptide reads, in one-letter code: Small ribosomal subunit protein eS17A (131 aa).

Belongs to the eukaryotic ribosomal protein eS17 family. In terms of assembly, component of the small ribosomal subunit (SSU). Mature yeast ribosomes consist of a small (40S) and a large (60S) subunit. The 40S small subunit contains 1 molecule of ribosomal RNA (18S rRNA) and at least 33 different proteins. The large 60S subunit contains 3 rRNA molecules (25S, 5.8S and 5S rRNA) and at least 46 different proteins.

Its subcellular location is the cytoplasm. Functionally, component of the ribosome, a large ribonucleoprotein complex responsible for the synthesis of proteins in the cell. The small ribosomal subunit (SSU) binds messenger RNAs (mRNAs) and translates the encoded message by selecting cognate aminoacyl-transfer RNA (tRNA) molecules. The large subunit (LSU) contains the ribosomal catalytic site termed the peptidyl transferase center (PTC), which catalyzes the formation of peptide bonds, thereby polymerizing the amino acids delivered by tRNAs into a polypeptide chain. The nascent polypeptides leave the ribosome through a tunnel in the LSU and interact with protein factors that function in enzymatic processing, targeting, and the membrane insertion of nascent chains at the exit of the ribosomal tunnel. This chain is Small ribosomal subunit protein eS17A (rps1701), found in Schizosaccharomyces pombe (strain 972 / ATCC 24843) (Fission yeast).